Reading from the N-terminus, the 33-residue chain is Mu/omega-theraphotoxin-Tap2a (33 aa).

Intrachain disulfides connect Cys-2–Cys-17, Cys-9–Cys-22, and Cys-16–Cys-29.

This sequence belongs to the neurotoxin 10 (Hwtx-1) family. 59 (Tltx) subfamily. In terms of tissue distribution, expressed by the venom gland.

It localises to the secreted. Gating-modifier toxin that inhibits both sodium (Nav) and calcium (Cav3) channels by inducing hyperpolarizing shift in voltage-dependence of activation and steady state inactivation. Inhibits Nav1.1/SCN1A, Nav1.2/SCN2A, Nav1.6/SCN6A, Nav1.7/SCN9A and Cav3.1/CACNA1G sodium and calcium channels at nanomolar concentrations (IC(50)=169-621 nM). Surprisingly, selectively slows fast inactivation of Nav1.3/SCN3A. Also shows moderate inhibition of Nav1.3/SCN3A sodium channels (IC(50)=1216 nM). This Theraphosa apophysis (Goliath pinkfoot tarantula) protein is Mu/omega-theraphotoxin-Tap2a.